Reading from the N-terminus, the 616-residue chain is Kelch-like protein 36 (616 aa).

A BTB domain is found at 46–113; that stretch reads CDVVLVADEQ…LYGGELVLDG (68 aa). In terms of domain architecture, BACK spans 148–250; the sequence is YLYLQELASI…PKNDLLHRVK (103 aa). 6 Kelch repeats span residues 296–345, 346–397, 398–444, 446–493, 494–546, and 547–595; these read CLLF…VLGG, FIFI…SIED, MLVA…IYKD, VYIS…SLGD, SIYS…VWEG, and RIYI…VCAL.

As to quaternary structure, interacts with CUL3.

It participates in protein modification; protein ubiquitination. Its function is as follows. Probable substrate-specific adapter of an E3 ubiquitin-protein ligase complex which mediates the ubiquitination and subsequent proteasomal degradation of target proteins. The sequence is that of Kelch-like protein 36 (KLHL36) from Bos taurus (Bovine).